Consider the following 295-residue polypeptide: Nucleotide-binding protein Sare_3328 (295 aa).

ATP is bound at residue 19-26; it reads GVSGGGRS. 70–73 contacts GTP; it reads DVRS.

Belongs to the RapZ-like family.

Displays ATPase and GTPase activities. The polypeptide is Nucleotide-binding protein Sare_3328 (Salinispora arenicola (strain CNS-205)).